The chain runs to 318 residues: Thymidylate synthase (318 aa).

DUMP is bound by residues arginine 25 and 180-181 (RR). Cysteine 200 (nucleophile) is an active-site residue. Residues 220–223 (RSAD), asparagine 231, and 261–263 (HIY) contribute to the dUMP site. Aspartate 223 serves as a coordination point for (6R)-5,10-methylene-5,6,7,8-tetrahydrofolate. Residue alanine 317 coordinates (6R)-5,10-methylene-5,6,7,8-tetrahydrofolate.

The protein belongs to the thymidylate synthase family. Bacterial-type ThyA subfamily. As to quaternary structure, homodimer.

It is found in the cytoplasm. The catalysed reaction is dUMP + (6R)-5,10-methylene-5,6,7,8-tetrahydrofolate = 7,8-dihydrofolate + dTMP. The protein operates within pyrimidine metabolism; dTTP biosynthesis. Catalyzes the reductive methylation of 2'-deoxyuridine-5'-monophosphate (dUMP) to 2'-deoxythymidine-5'-monophosphate (dTMP) while utilizing 5,10-methylenetetrahydrofolate (mTHF) as the methyl donor and reductant in the reaction, yielding dihydrofolate (DHF) as a by-product. This enzymatic reaction provides an intracellular de novo source of dTMP, an essential precursor for DNA biosynthesis. In Ligilactobacillus salivarius (strain UCC118) (Lactobacillus salivarius), this protein is Thymidylate synthase.